The sequence spans 175 residues: Cytochrome c-type biogenesis protein CcmE (175 aa).

The Cytoplasmic segment spans residues 1-8; it reads MNAVRRKK. The chain crosses the membrane as a helical; Signal-anchor for type II membrane protein span at residues 9-29; the sequence is LIWVAATLAGAIIAVLLVIYA. The Periplasmic segment spans residues 30 to 175; that stretch reads IGQQTDYYFD…GNHTTSTLQE (146 aa). Heme contacts are provided by His124 and Tyr128. Positions 142–175 are disordered; sequence AAKGVTPTSEQFSPAIPVKQTAGEGNHTTSTLQE.

The protein belongs to the CcmE/CycJ family.

Its subcellular location is the cell inner membrane. In terms of biological role, heme chaperone required for the biogenesis of c-type cytochromes. Transiently binds heme delivered by CcmC and transfers the heme to apo-cytochromes in a process facilitated by CcmF and CcmH. The polypeptide is Cytochrome c-type biogenesis protein CcmE (Psychrobacter sp. (strain PRwf-1)).